The following is a 325-amino-acid chain: D-alanine--D-alanine ligase (325 aa).

In terms of domain architecture, ATP-grasp spans 121-316 (KYVFEGCGLP…FEELVVRILR (196 aa)). 147-202 (VAALGTPLSVKPAHEGSSIGIRKVNSAAELAEAYEAAARLDDLVLVEQWIEGPEFT) contributes to the ATP binding site. Mg(2+) is bound by residues Asp-270, Glu-283, and Asn-285.

This sequence belongs to the D-alanine--D-alanine ligase family. Mg(2+) serves as cofactor. It depends on Mn(2+) as a cofactor.

The protein resides in the cytoplasm. The catalysed reaction is 2 D-alanine + ATP = D-alanyl-D-alanine + ADP + phosphate + H(+). The protein operates within cell wall biogenesis; peptidoglycan biosynthesis. Its function is as follows. Cell wall formation. This is D-alanine--D-alanine ligase from Marinobacter nauticus (strain ATCC 700491 / DSM 11845 / VT8) (Marinobacter aquaeolei).